A 418-amino-acid polypeptide reads, in one-letter code: Protein FAM53A (418 aa).

Disordered regions lie at residues 198–236 and 248–269; these read TSPV…FNPR and ETGN…LSRR. Residues 205–229 are compositionally biased toward low complexity; that stretch reads SSASSGFVDSSEGSTSSSTRWNSGG. A compositionally biased stretch (polar residues) spans 248 to 265; sequence ETGNLLPSANSTPTSTPE. The Nuclear localization signal motif lies at 285–293; the sequence is KKSRLKRRR.

It belongs to the FAM53 family.

Its subcellular location is the nucleus. May play an important role in neural development; the dorsomedial roof of the third ventricle. This is Protein FAM53A from Gallus gallus (Chicken).